Reading from the N-terminus, the 473-residue chain is Glutamate--tRNA ligase (473 aa).

A 'HIGH' region motif is present at residues 9–19 (PSPTGELHLGS). Positions 237–241 (KLSKK) match the 'KMSKS' region motif. K240 contributes to the ATP binding site.

It belongs to the class-I aminoacyl-tRNA synthetase family. Glutamate--tRNA ligase type 1 subfamily. In terms of assembly, monomer.

Its subcellular location is the cytoplasm. The enzyme catalyses tRNA(Glu) + L-glutamate + ATP = L-glutamyl-tRNA(Glu) + AMP + diphosphate. Catalyzes the attachment of glutamate to tRNA(Glu) in a two-step reaction: glutamate is first activated by ATP to form Glu-AMP and then transferred to the acceptor end of tRNA(Glu). The chain is Glutamate--tRNA ligase from Wigglesworthia glossinidia brevipalpis.